The chain runs to 537 residues: Probable protein kinase UbiB (537 aa).

Residues 24–44 (LLFEQPLLPWWLASLRLLMPW) form a helical membrane-spanning segment. The region spanning 126–494 (RFDVEPLASA…RRRQGDNWAL (369 aa)) is the Protein kinase domain. Residues 132-140 (LASASVAQV) and lysine 154 each bind ATP. Aspartate 289 serves as the catalytic Proton acceptor. The next 2 helical transmembrane spans lie at 493–513 (ALRLLGAGLLGGGATLAAGAV) and 515–535 (LSAPAAWPAWLMLAAGLYLIV).

It belongs to the ABC1 family. UbiB subfamily.

It is found in the cell inner membrane. Its pathway is cofactor biosynthesis; ubiquinone biosynthesis [regulation]. In terms of biological role, is probably a protein kinase regulator of UbiI activity which is involved in aerobic coenzyme Q (ubiquinone) biosynthesis. This is Probable protein kinase UbiB from Pseudomonas entomophila (strain L48).